We begin with the raw amino-acid sequence, 131 residues long: Large ribosomal subunit protein bL17 (131 aa).

The protein belongs to the bacterial ribosomal protein bL17 family. Part of the 50S ribosomal subunit. Contacts protein L32.

This Burkholderia ambifaria (strain MC40-6) protein is Large ribosomal subunit protein bL17.